A 258-amino-acid polypeptide reads, in one-letter code: UDP-N-acetylenolpyruvoylglucosamine reductase (258 aa).

Arg142 is a catalytic residue. Catalysis depends on Ser184, which acts as the Proton donor. Glu254 is an active-site residue.

Belongs to the MurB family. The cofactor is FAD.

The protein localises to the cytoplasm. It carries out the reaction UDP-N-acetyl-alpha-D-muramate + NADP(+) = UDP-N-acetyl-3-O-(1-carboxyvinyl)-alpha-D-glucosamine + NADPH + H(+). The protein operates within cell wall biogenesis; peptidoglycan biosynthesis. In terms of biological role, cell wall formation. This chain is UDP-N-acetylenolpyruvoylglucosamine reductase, found in Campylobacter jejuni (strain RM1221).